Reading from the N-terminus, the 176-residue chain is RING-H2 finger protein ATL73 (176 aa).

Positions 1 to 16 (MARFLLATQATPTISA) are cleaved as a signal peptide. The chain crosses the membrane as a helical span at residues 42 to 62 (VIILAALLCALICALGINSVL). Residues 113–155 (CLICLGDFVEGETVRVLPKCNHGFHVKCIDTWLLSHSSCPTCR) form an RING-type; atypical zinc finger.

Belongs to the RING-type zinc finger family. ATL subfamily.

It localises to the membrane. The catalysed reaction is S-ubiquitinyl-[E2 ubiquitin-conjugating enzyme]-L-cysteine + [acceptor protein]-L-lysine = [E2 ubiquitin-conjugating enzyme]-L-cysteine + N(6)-ubiquitinyl-[acceptor protein]-L-lysine.. Its pathway is protein modification; protein ubiquitination. The protein is RING-H2 finger protein ATL73 (ATL73) of Arabidopsis thaliana (Mouse-ear cress).